We begin with the raw amino-acid sequence, 323 residues long: Elongation factor P--(R)-beta-lysine ligase (323 aa).

Position 76–78 (76–78 (SPE)) interacts with substrate. ATP is bound by residues 100–102 (RNE) and Asn109. Tyr118 provides a ligand contact to substrate. 242-243 (EL) provides a ligand contact to ATP. Glu249 lines the substrate pocket. Gly298 contacts ATP.

The protein belongs to the class-II aminoacyl-tRNA synthetase family. EpmA subfamily. Homodimer.

The enzyme catalyses D-beta-lysine + L-lysyl-[protein] + ATP = N(6)-((3R)-3,6-diaminohexanoyl)-L-lysyl-[protein] + AMP + diphosphate + H(+). Functionally, with EpmB is involved in the beta-lysylation step of the post-translational modification of translation elongation factor P (EF-P). Catalyzes the ATP-dependent activation of (R)-beta-lysine produced by EpmB, forming a lysyl-adenylate, from which the beta-lysyl moiety is then transferred to the epsilon-amino group of a conserved specific lysine residue in EF-P. This chain is Elongation factor P--(R)-beta-lysine ligase, found in Mannheimia succiniciproducens (strain KCTC 0769BP / MBEL55E).